A 460-amino-acid chain; its full sequence is Chromosomal replication initiator protein DnaA 1 (460 aa).

The interval 1 to 68 (MRAWEEFLLL…KSGLVNNNNK (68 aa)) is domain I, interacts with DnaA modulators. The domain II stretch occupies residues 68–102 (KPIRVHVTSVDKAAPFYKEKQMQQEKTAYFTMHYG). Residues 103–321 (SVNPEMTFSN…HALNLLAKRV (219 aa)) form a domain III, AAA+ region region. ATP-binding residues include glycine 151, glycine 153, lysine 154, and threonine 155. Residues 322–460 (MYKKLSHQLL…EFFPSEEMII (139 aa)) form a domain IV, binds dsDNA region.

The protein belongs to the DnaA family. As to quaternary structure, oligomerizes as a right-handed, spiral filament on DNA at oriC.

Its subcellular location is the cytoplasm. Functionally, plays an essential role in the initiation and regulation of chromosomal replication. ATP-DnaA binds to the origin of replication (oriC) to initiate formation of the DNA replication initiation complex once per cell cycle. Binds the DnaA box (a 9 base pair repeat at the origin) and separates the double-stranded (ds)DNA. Forms a right-handed helical filament on oriC DNA; dsDNA binds to the exterior of the filament while single-stranded (ss)DNA is stabiized in the filament's interior. The ATP-DnaA-oriC complex binds and stabilizes one strand of the AT-rich DNA unwinding element (DUE), permitting loading of DNA polymerase. After initiation quickly degrades to an ADP-DnaA complex that is not apt for DNA replication. Binds acidic phospholipids. The protein is Chromosomal replication initiator protein DnaA 1 of Chlamydia pneumoniae (Chlamydophila pneumoniae).